The sequence spans 104 residues: Large ribosomal subunit protein uL24 (104 aa).

It belongs to the universal ribosomal protein uL24 family. As to quaternary structure, part of the 50S ribosomal subunit. Post-translationally, a methylated and unmethylated form are thought to exist.

Its function is as follows. One of two assembly initiator proteins, it binds directly to the 5'-end of the 23S rRNA, where it nucleates assembly of the 50S subunit. Functionally, one of the proteins that surrounds the polypeptide exit tunnel on the outside of the subunit. The polypeptide is Large ribosomal subunit protein uL24 (Rhodopseudomonas palustris (strain ATCC BAA-98 / CGA009)).